The sequence spans 277 residues: Cis-2,3-dihydrobiphenyl-2,3-diol dehydrogenase (277 aa).

9 to 33 (LITGGASGLGRALVDRFVAERAKVA) serves as a coordination point for NAD(+). Residue Ser-142 participates in substrate binding. Tyr-155 serves as the catalytic Proton acceptor.

Belongs to the short-chain dehydrogenases/reductases (SDR) family. Homotetramer.

The catalysed reaction is (2R,3S)-3-phenylcyclohexa-3,5-diene-1,2-diol + NAD(+) = biphenyl-2,3-diol + NADH + H(+). It participates in xenobiotic degradation; biphenyl degradation; 2-hydroxy-2,4-pentadienoate and benzoate from biphenyl: step 2/4. This chain is Cis-2,3-dihydrobiphenyl-2,3-diol dehydrogenase (bphB), found in Pseudomonas putida (Arthrobacter siderocapsulatus).